We begin with the raw amino-acid sequence, 288 residues long: MQLHEQIANISVTFNDIPRSDHSMTPTELCYFDDFATTLVVDSVLNFTTHKMSKKRRYLYQDEYRTARTVMKTFREQRDWTNAIYGLLTLRSVSHFLSKLPPNKLFEFRDHIVRFLNMFILDSGYTIQECKRYSQEGHQGAKLVSTGVWSRGDKIERLSGVVCLLSSEDEDSILAQEGSDFSVMYSTRKRCSTLWLGPGAYINHDCRPTCEFVSHGSTAHIRVLRDMVPGDEITCFYGSEFFGPNNIDCECCTCEKNMNGAFSYLRGNENAEPIISEKKTKYELRSRS.

One can recognise an SET domain in the interval 128-238; the sequence is QECKRYSQEG…PGDEITCFYG (111 aa).

Belongs to the class V-like SAM-binding methyltransferase superfamily. Histone-lysine methyltransferase family. Suvar4-20 subfamily.

It localises to the nucleus. Its subcellular location is the chromosome. The enzyme catalyses N(6)-methyl-L-lysyl(20)-[histone H4] + S-adenosyl-L-methionine = N(6),N(6)-dimethyl-L-lysyl(20)-[histone H4] + S-adenosyl-L-homocysteine + H(+). The catalysed reaction is N(6),N(6)-dimethyl-L-lysyl(20)-[histone H4] + S-adenosyl-L-methionine = N(6),N(6),N(6)-trimethyl-L-lysyl(20)-[histone H4] + S-adenosyl-L-homocysteine + H(+). In terms of biological role, histone methyltransferase that specifically di- and trimethylates 'Lys-20' of histone H4 (H4K20me2/me3). H4 'Lys-20' trimethylation represents a specific tag for epigenetic transcriptional repression. Contributes to dosage compensation of X chromosome-relative to autosome-linked gene expression, possibly by converting H4K20me1 to H4K20m2/me3 on autosomes. Involved in the regulation of growth and body fat metabolism downstream of the TOR complex 2 pathway. The sequence is that of Histone-lysine N-methyltransferase Suv4-20 (set-4) from Caenorhabditis elegans.